We begin with the raw amino-acid sequence, 261 residues long: Putative quercetin 2,3-dioxygenase Ta0133 (261 aa).

Residues H17, H19, H61, and E63 each contribute to the a divalent metal cation site.

It belongs to the pirin family. A divalent metal cation is required as a cofactor.

The enzyme catalyses quercetin + O2 = 2-(3,4-dihydroxybenzoyloxy)-4,6-dihydroxybenzoate + CO. Its pathway is flavonoid metabolism; quercetin degradation. In terms of biological role, putative quercetin 2,3-dioxygenase. The protein is Putative quercetin 2,3-dioxygenase Ta0133 of Thermoplasma acidophilum (strain ATCC 25905 / DSM 1728 / JCM 9062 / NBRC 15155 / AMRC-C165).